Reading from the N-terminus, the 95-residue chain is Aspartyl/glutamyl-tRNA(Asn/Gln) amidotransferase subunit C (95 aa).

Belongs to the GatC family. Heterotrimer of A, B and C subunits.

The enzyme catalyses L-glutamyl-tRNA(Gln) + L-glutamine + ATP + H2O = L-glutaminyl-tRNA(Gln) + L-glutamate + ADP + phosphate + H(+). The catalysed reaction is L-aspartyl-tRNA(Asn) + L-glutamine + ATP + H2O = L-asparaginyl-tRNA(Asn) + L-glutamate + ADP + phosphate + 2 H(+). Its function is as follows. Allows the formation of correctly charged Asn-tRNA(Asn) or Gln-tRNA(Gln) through the transamidation of misacylated Asp-tRNA(Asn) or Glu-tRNA(Gln) in organisms which lack either or both of asparaginyl-tRNA or glutaminyl-tRNA synthetases. The reaction takes place in the presence of glutamine and ATP through an activated phospho-Asp-tRNA(Asn) or phospho-Glu-tRNA(Gln). The polypeptide is Aspartyl/glutamyl-tRNA(Asn/Gln) amidotransferase subunit C (Chlorobium phaeobacteroides (strain DSM 266 / SMG 266 / 2430)).